The chain runs to 142 residues: Small ribosomal subunit protein uS12 (142 aa).

Residues Met1–Gln44 are disordered. Residues Ala7–Gln16 are compositionally biased toward basic residues. Residues Gln17 to Pro38 show a composition bias toward basic and acidic residues.

This sequence belongs to the universal ribosomal protein uS12 family. In terms of assembly, part of the 30S ribosomal subunit.

Its function is as follows. With S4 and S5 plays an important role in translational accuracy. Located at the interface of the 30S and 50S subunits. The polypeptide is Small ribosomal subunit protein uS12 (Halobacterium salinarum (strain ATCC 29341 / DSM 671 / R1)).